We begin with the raw amino-acid sequence, 184 residues long: Ribosome-recycling factor (184 aa).

The protein belongs to the RRF family.

Its subcellular location is the cytoplasm. Responsible for the release of ribosomes from messenger RNA at the termination of protein biosynthesis. May increase the efficiency of translation by recycling ribosomes from one round of translation to another. The chain is Ribosome-recycling factor from Psychrobacter sp. (strain PRwf-1).